The chain runs to 150 residues: Cell division protein SepF (150 aa).

The segment at 26 to 45 is disordered; that stretch reads DREEIPEEHESKDRTAYQSK.

The protein belongs to the SepF family. Homodimer. Interacts with FtsZ.

It is found in the cytoplasm. Cell division protein that is part of the divisome complex and is recruited early to the Z-ring. Probably stimulates Z-ring formation, perhaps through the cross-linking of FtsZ protofilaments. Its function overlaps with FtsA. This is Cell division protein SepF from Bacillus licheniformis (strain ATCC 14580 / DSM 13 / JCM 2505 / CCUG 7422 / NBRC 12200 / NCIMB 9375 / NCTC 10341 / NRRL NRS-1264 / Gibson 46).